The chain runs to 871 residues: Phosphoinositide 3-kinase regulatory subunit 5 (871 aa).

M1 carries the post-translational modification N-acetylmethionine. A heterodimerization region spans residues 25–101 (SLGRRSAPWS…TPHFPPDSDL (77 aa)). A disordered region spans residues 381 to 413 (MDSGYVEDSEENSEWPQKPGSQKRQGHRRPGQK). Residues S451 and S500 each carry the phosphoserine modification. The interval 646–746 (PILADMLLYY…WSNLEKVCTS (101 aa)) is interaction with beta-gamma G protein dimers.

Heterodimer of a catalytic subunit (PIK3CG/p120) and a regulatory (PIK3R5a/p101) subunit. Interacts with beta-gamma G protein dimers.

The protein localises to the nucleus. It localises to the cytoplasm. Its subcellular location is the cell membrane. With respect to regulation, greatly activated by G gamma proteins. Functionally, regulatory subunit of the PI3K gamma complex. Required for recruitment of the catalytic subunit to the plasma membrane via interaction with beta-gamma G protein dimers. Required for G protein-mediated activation of PIK3CG. The chain is Phosphoinositide 3-kinase regulatory subunit 5 (Pik3r5) from Mus musculus (Mouse).